A 60-amino-acid chain; its full sequence is UPF0434 protein Aave_2563 (60 aa).

The protein belongs to the UPF0434 family.

In Paracidovorax citrulli (strain AAC00-1) (Acidovorax citrulli), this protein is UPF0434 protein Aave_2563.